A 278-amino-acid chain; its full sequence is ADP-dependent (S)-NAD(P)H-hydrate dehydratase (278 aa).

The YjeF C-terminal domain maps to 5 to 272 (TTEIVSRTII…TRIPTYMHRF (268 aa)). 3 residues coordinate (6S)-NADPHX: alanine 40, glycine 103, and histidine 152. AMP is bound at residue glycine 214. A (6S)-NADPHX-binding site is contributed by aspartate 215.

The protein belongs to the NnrD/CARKD family. As to quaternary structure, homotetramer. It depends on Mg(2+) as a cofactor.

The enzyme catalyses (6S)-NADHX + ADP = AMP + phosphate + NADH + H(+). It carries out the reaction (6S)-NADPHX + ADP = AMP + phosphate + NADPH + H(+). Catalyzes the dehydration of the S-form of NAD(P)HX at the expense of ADP, which is converted to AMP. Together with NAD(P)HX epimerase, which catalyzes the epimerization of the S- and R-forms, the enzyme allows the repair of both epimers of NAD(P)HX, a damaged form of NAD(P)H that is a result of enzymatic or heat-dependent hydration. This chain is ADP-dependent (S)-NAD(P)H-hydrate dehydratase, found in Lactiplantibacillus plantarum (strain ATCC BAA-793 / NCIMB 8826 / WCFS1) (Lactobacillus plantarum).